Here is a 494-residue protein sequence, read N- to C-terminus: Probable terminase, large subunit (494 aa).

Position 26–33 (26–33 (ADVLFGKT)) interacts with ATP. The Walker A motif motif lies at 56 to 63 (SGHGTGKS). Positions 158–163 (LYIIDE) match the Walker B motif motif. Glu163 acts as the For ATPase activity in catalysis. Positions 293, 356, and 446 each coordinate Mg(2+).

The protein belongs to the punalikevirus large terminase family. As to quaternary structure, interacts with pacA protein. Requires Mg(2+) as cofactor.

Component of the molecular motor that translocates genomic DNA in empty capsid during DNA packaging. Heterooligomerize with small terminase protein to be docked on capsid portal protein. Forms a ring-like structure through which genomic DNA is translocated into the capsid. May have or induce an endonuclease activity to cleave the genome concatemer after encapsidation. The polypeptide is Probable terminase, large subunit (pacB) (Escherichia coli (Bacteriophage P7)).